A 120-amino-acid polypeptide reads, in one-letter code: NAD(P)H-quinone oxidoreductase subunit 3, chloroplastic (120 aa).

3 helical membrane-spanning segments follow: residues 7–27 (YETF…AFLI), 64–84 (MFAL…PWAM), and 88–108 (ILGI…IVGS).

The protein belongs to the complex I subunit 3 family. NDH is composed of at least 16 different subunits, 5 of which are encoded in the nucleus.

Its subcellular location is the plastid. The protein resides in the chloroplast thylakoid membrane. The catalysed reaction is a plastoquinone + NADH + (n+1) H(+)(in) = a plastoquinol + NAD(+) + n H(+)(out). The enzyme catalyses a plastoquinone + NADPH + (n+1) H(+)(in) = a plastoquinol + NADP(+) + n H(+)(out). In terms of biological role, NDH shuttles electrons from NAD(P)H:plastoquinone, via FMN and iron-sulfur (Fe-S) centers, to quinones in the photosynthetic chain and possibly in a chloroplast respiratory chain. The immediate electron acceptor for the enzyme in this species is believed to be plastoquinone. Couples the redox reaction to proton translocation, and thus conserves the redox energy in a proton gradient. This Cycas taitungensis (Prince sago) protein is NAD(P)H-quinone oxidoreductase subunit 3, chloroplastic.